The sequence spans 398 residues: Cytochrome b (398 aa).

4 helical membrane-spanning segments follow: residues 38-58, 82-104, 119-139, and 185-205; these read FGPL…FLAM, WFLR…FHMF, VRCS…IGYV, and FFSL…LHLG. Positions 88 and 102 each coordinate heme b. Residues histidine 189 and histidine 203 each contribute to the heme b site. An a ubiquinone-binding site is contributed by histidine 208. The next 4 membrane-spanning stretches (helical) occupy residues 231–251, 295–316, 328–348, and 355–374; these read YYVK…IFIF, AGGV…FLNQ, IYHI…WIGC, and FVTI…AIMP.

The protein belongs to the cytochrome b family. The main subunits of complex b-c1 are: cytochrome b, cytochrome c1 and the Rieske protein. The cofactor is heme b.

Its subcellular location is the mitochondrion inner membrane. Functionally, component of the ubiquinol-cytochrome c reductase complex (complex III or cytochrome b-c1 complex) that is part of the mitochondrial respiratory chain. The b-c1 complex mediates electron transfer from ubiquinol to cytochrome c. Contributes to the generation of a proton gradient across the mitochondrial membrane that is then used for ATP synthesis. The polypeptide is Cytochrome b (MT-CYB) (Daucus carota (Wild carrot)).